We begin with the raw amino-acid sequence, 626 residues long: (+)-3-carene synthase 2, chloroplastic (626 aa).

Residues 1-45 constitute a chloroplast transit peptide; sequence MSLISAVPLASSCVSKSLISSVREHTALRRAIATLQMSRRGKSVA. The Mg(2+) site is built by D377, D381, and D529. Residues 377–381 carry the DDXXD motif motif; it reads DDMYD.

This sequence belongs to the terpene synthase family. Tpsd subfamily. The cofactor is Mg(2+). Mn(2+) serves as cofactor.

Its subcellular location is the plastid. The protein localises to the chloroplast. It carries out the reaction (2E)-geranyl diphosphate = (+)-car-3-ene + diphosphate. The protein operates within terpene metabolism; oleoresin biosynthesis. It functions in the pathway secondary metabolite biosynthesis; terpenoid biosynthesis. Monoterpene synthase (TPS) involved in the biosynthesis of monoterpene natural products included in conifer oleoresin secretions and volatile emissions; these compounds contribute to biotic and abiotic stress defense against herbivores and pathogens. Catalyzes the conversion of (2E)-geranyl diphosphate (GPP) to (+)-3-carene. The protein is (+)-3-carene synthase 2, chloroplastic of Pinus banksiana (Jack pine).